A 382-amino-acid chain; its full sequence is Na(+)/H(+) antiporter NhaA 2 (382 aa).

11 helical membrane-spanning segments follow: residues 7-27 (MALS…LALL), 58-78 (LDLW…GLEL), 94-114 (SLPI…FAAI), 124-144 (GWAI…MLLG), 153-173 (LFLL…IALF), 178-198 (LSAL…LLNY), 199-219 (YHIT…IAML), 255-275 (NPWV…GIDI), 291-311 (IILG…FIAI), 327-347 (FYGI…IDGL), and 361-381 (LAIL…LKIV).

This sequence belongs to the NhaA Na(+)/H(+) (TC 2.A.33) antiporter family.

It is found in the cell inner membrane. The enzyme catalyses Na(+)(in) + 2 H(+)(out) = Na(+)(out) + 2 H(+)(in). Functionally, na(+)/H(+) antiporter that extrudes sodium in exchange for external protons. In Campylobacter jejuni subsp. doylei (strain ATCC BAA-1458 / RM4099 / 269.97), this protein is Na(+)/H(+) antiporter NhaA 2.